We begin with the raw amino-acid sequence, 167 residues long: ATP synthase subunit b (167 aa).

The chain crosses the membrane as a helical span at residues 15–37 (FWQTVIFLVTLYLLSKFAWGPIM).

This sequence belongs to the ATPase B chain family. As to quaternary structure, F-type ATPases have 2 components, F(1) - the catalytic core - and F(0) - the membrane proton channel. F(1) has five subunits: alpha(3), beta(3), gamma(1), delta(1), epsilon(1). F(0) has three main subunits: a(1), b(2) and c(10-14). The alpha and beta chains form an alternating ring which encloses part of the gamma chain. F(1) is attached to F(0) by a central stalk formed by the gamma and epsilon chains, while a peripheral stalk is formed by the delta and b chains.

It localises to the cell inner membrane. Functionally, f(1)F(0) ATP synthase produces ATP from ADP in the presence of a proton or sodium gradient. F-type ATPases consist of two structural domains, F(1) containing the extramembraneous catalytic core and F(0) containing the membrane proton channel, linked together by a central stalk and a peripheral stalk. During catalysis, ATP synthesis in the catalytic domain of F(1) is coupled via a rotary mechanism of the central stalk subunits to proton translocation. In terms of biological role, component of the F(0) channel, it forms part of the peripheral stalk, linking F(1) to F(0). This chain is ATP synthase subunit b, found in Cytophaga hutchinsonii (strain ATCC 33406 / DSM 1761 / CIP 103989 / NBRC 15051 / NCIMB 9469 / D465).